The sequence spans 567 residues: Phosphoglucomutase-like protein 5 (567 aa).

The disordered stretch occupies residues 1–26 (MEGSPIPVLTVPTAPYEDQRPAGGGG). Residue Thr-120 is modified to Phosphothreonine. At Ser-122 the chain carries Phosphoserine.

The protein belongs to the phosphohexose mutase family. Interacts with DMD/dystrophin; the interaction is direct. Interacts with UTRN/utrophin. In terms of tissue distribution, detected in smooth and cardiac muscle at high levels and in skeletal muscle at low level. Present in other tissues due to vascular or other smooth muscle component. Low levels are present in liver, kidney, skin and brain (at protein level).

It localises to the cell junction. The protein resides in the adherens junction. Its subcellular location is the cytoplasm. The protein localises to the cytoskeleton. It is found in the cell membrane. It localises to the sarcolemma. Its function is as follows. Component of adherens-type cell-cell and cell-matrix junctions. Has no phosphoglucomutase activity in vitro. The protein is Phosphoglucomutase-like protein 5 of Homo sapiens (Human).